Consider the following 540-residue polypeptide: Alanine aminotransferase 2, mitochondrial (540 aa).

The N-terminal 46 residues, 1 to 46, are a transit peptide targeting the mitochondrion; sequence MRRFLINQAKGLVDHSRRQHHHKSPSFLSPQPRPLASSPPALSRFF. The interval 11-40 is disordered; sequence GLVDHSRRQHHHKSPSFLSPQPRPLASSPP. The segment covering 28-40 has biased composition (low complexity); sequence LSPQPRPLASSPP. Lys357 bears the N6-(pyridoxal phosphate)lysine mark.

It belongs to the class-I pyridoxal-phosphate-dependent aminotransferase family. Alanine aminotransferase subfamily. Homodimer. It depends on pyridoxal 5'-phosphate as a cofactor. In terms of processing, the N-terminus is blocked. Expressed in shoots, essentially in leaves and flowers, mostly in vascular tissues. Also detected in stems and roots.

The protein resides in the mitochondrion. It catalyses the reaction L-alanine + 2-oxoglutarate = pyruvate + L-glutamate. It participates in photosynthesis; C4 acid pathway. Its pathway is amino-acid degradation; L-alanine degradation via transaminase pathway; pyruvate from L-alanine: step 1/1. This Arabidopsis thaliana (Mouse-ear cress) protein is Alanine aminotransferase 2, mitochondrial (ALAAT2).